The sequence spans 606 residues: ATP-dependent rRNA helicase spb4 (606 aa).

Residues 1–29 carry the Q motif motif; sequence MSFQSINIDKWLKNAVAAQGFKKMTPVQA. Residues 32–213 enclose the Helicase ATP-binding domain; it reads IPLFLKNKDL…KIAGLRNSVR (182 aa). Residue 45-52 coordinates ATP; that stretch reads AVTGSGKT. The DEAD box signature appears at 161–164; it reads DEAD. A Helicase C-terminal domain is found at 246 to 400; the sequence is CMIHLLCTIE…ALDLSRLKVL (155 aa). Residues 521–574 are disordered; the sequence is KQKEVKEKRNTRREKRKSKKEFLKAQKNEASNNLKQEIVSKAGAQETENDDLID. Residues 521-601 are a coiled coil; it reads KQKEVKEKRN…KSKKRKNQAS (81 aa). Positions 529 to 539 are enriched in basic residues; it reads RNTRREKRKSK.

Belongs to the DEAD box helicase family. DDX55/SPB4 subfamily. Component of pre-60S ribosomal complexes.

The protein resides in the nucleus. The protein localises to the nucleolus. It catalyses the reaction ATP + H2O = ADP + phosphate + H(+). Its function is as follows. ATP-binding RNA helicase involved in the biogenesis of 60S ribosomal subunits. Binds 90S pre-ribosomal particles and dissociates from pre-60S ribosomal particles after processing of 27SB pre-rRNA. Required for the normal formation of 18S rRNA through the processing of pre-rRNAs at sites A0, A1 and A2, and the normal formation of 25S and 5.8S rRNAs through the processing of pre-rRNAs at sites C1 and C2. The protein is ATP-dependent rRNA helicase spb4 of Schizosaccharomyces pombe (strain 972 / ATCC 24843) (Fission yeast).